The chain runs to 276 residues: NH(3)-dependent NAD(+) synthetase (276 aa).

46–53 (GISGGQDS) provides a ligand contact to ATP. Asp52 serves as a coordination point for Mg(2+). Residue Arg140 coordinates deamido-NAD(+). Thr160 serves as a coordination point for ATP. Glu165 provides a ligand contact to Mg(2+). Residues Lys173 and Asp180 each contribute to the deamido-NAD(+) site. Residues Lys189 and Thr211 each contribute to the ATP site. 260-261 (HK) is a deamido-NAD(+) binding site.

It belongs to the NAD synthetase family. In terms of assembly, homodimer.

The enzyme catalyses deamido-NAD(+) + NH4(+) + ATP = AMP + diphosphate + NAD(+) + H(+). The protein operates within cofactor biosynthesis; NAD(+) biosynthesis; NAD(+) from deamido-NAD(+) (ammonia route): step 1/1. Catalyzes the ATP-dependent amidation of deamido-NAD to form NAD. Uses ammonia as a nitrogen source. The protein is NH(3)-dependent NAD(+) synthetase of Citrobacter koseri (strain ATCC BAA-895 / CDC 4225-83 / SGSC4696).